A 410-amino-acid polypeptide reads, in one-letter code: Peptidase T (410 aa).

H79 contacts Zn(2+). D81 is an active-site residue. Residue D142 participates in Zn(2+) binding. E176 (proton acceptor) is an active-site residue. Residues E177, D199, and H381 each coordinate Zn(2+).

It belongs to the peptidase M20B family. Requires Zn(2+) as cofactor.

It is found in the cytoplasm. It catalyses the reaction Release of the N-terminal residue from a tripeptide.. Cleaves the N-terminal amino acid of tripeptides. This chain is Peptidase T, found in Listeria monocytogenes serotype 4a (strain HCC23).